Reading from the N-terminus, the 241-residue chain is Cell division cycle-associated protein 4 (241 aa).

The 48-residue stretch at 30–77 (YSLQRQSLLDMSLVKLQLCHMLVEPNLCRSVLIANTVRQIQEEMTQDG) folds into the SERTA domain.

In terms of tissue distribution, highest levels of expression in the pancreas, thymus, testis, spleen, liver, placenta and leukocytes. Relatively low levels in the lung, kidney, prostate, ovary, small intestine and colon. Hardly detectable, if at all, in the brain, skeletal muscle and heart.

It is found in the nucleus. May participate in the regulation of cell proliferation through the E2F/RB pathway. May be involved in molecular regulation of hematopoietic stem cells and progenitor cell lineage commitment and differentiation. This Homo sapiens (Human) protein is Cell division cycle-associated protein 4 (CDCA4).